We begin with the raw amino-acid sequence, 233 residues long: 7-cyano-7-deazaguanine synthase (233 aa).

Residue Leu13–Met23 participates in ATP binding. Zn(2+)-binding residues include Cys197, Cys207, Cys210, and Cys213.

Belongs to the QueC family. It depends on Zn(2+) as a cofactor.

It catalyses the reaction 7-carboxy-7-deazaguanine + NH4(+) + ATP = 7-cyano-7-deazaguanine + ADP + phosphate + H2O + H(+). Its pathway is purine metabolism; 7-cyano-7-deazaguanine biosynthesis. Catalyzes the ATP-dependent conversion of 7-carboxy-7-deazaguanine (CDG) to 7-cyano-7-deazaguanine (preQ(0)). The chain is 7-cyano-7-deazaguanine synthase from Desulfatibacillum aliphaticivorans.